A 503-amino-acid chain; its full sequence is Cytochrome P450 3A9 (503 aa).

C442 lines the heme pocket.

It belongs to the cytochrome P450 family. It depends on heme as a cofactor. As to expression, mainly expressed in olfactory epithelium.

It is found in the endoplasmic reticulum membrane. It localises to the microsome membrane. The catalysed reaction is an organic molecule + reduced [NADPH--hemoprotein reductase] + O2 = an alcohol + oxidized [NADPH--hemoprotein reductase] + H2O + H(+). Its function is as follows. This isozyme seems to be implicated in olfaction. Active in the demethylation of erythromycin as well as benzphetamine. The polypeptide is Cytochrome P450 3A9 (Cyp3a9) (Rattus norvegicus (Rat)).